A 388-amino-acid polypeptide reads, in one-letter code: Succinate--CoA ligase [ADP-forming] subunit beta (388 aa).

The 236-residue stretch at 9-244 (KAIFRSMGVA…LEEEDPKEIE (236 aa)) folds into the ATP-grasp domain. ATP-binding positions include Lys-46, 53-55 (GRG), Glu-99, Cys-102, and Glu-107. The Mg(2+) site is built by Asn-199 and Asp-213. Residues Asn-264 and 321 to 323 (GIM) each bind substrate.

It belongs to the succinate/malate CoA ligase beta subunit family. In terms of assembly, heterotetramer of two alpha and two beta subunits. It depends on Mg(2+) as a cofactor.

It carries out the reaction succinate + ATP + CoA = succinyl-CoA + ADP + phosphate. It catalyses the reaction GTP + succinate + CoA = succinyl-CoA + GDP + phosphate. Its pathway is carbohydrate metabolism; tricarboxylic acid cycle; succinate from succinyl-CoA (ligase route): step 1/1. Functionally, succinyl-CoA synthetase functions in the citric acid cycle (TCA), coupling the hydrolysis of succinyl-CoA to the synthesis of either ATP or GTP and thus represents the only step of substrate-level phosphorylation in the TCA. The beta subunit provides nucleotide specificity of the enzyme and binds the substrate succinate, while the binding sites for coenzyme A and phosphate are found in the alpha subunit. The chain is Succinate--CoA ligase [ADP-forming] subunit beta from Staphylococcus saprophyticus subsp. saprophyticus (strain ATCC 15305 / DSM 20229 / NCIMB 8711 / NCTC 7292 / S-41).